We begin with the raw amino-acid sequence, 417 residues long: Putative UDP-arabinose 4-epimerase 2 (417 aa).

At 1-31 (MLNLGRARTGRQNRSMSFEGLDFADPKKNNN) the chain is on the cytoplasmic side. Residues 32-54 (YMGKIVLVMTLTAMCILLLNQSP) traverse the membrane as a helical; Signal-anchor for type II membrane protein segment. At 55-417 (TFNTPSVFSR…YGSSSLVSAY (363 aa)) the chain is on the lumenal side. 71–102 (HVLVTGGAGYIGSHAALRLLKDSYRVTIVDNL) is a binding site for NAD(+). Residue Tyr-219 is the Proton acceptor of the active site.

This sequence belongs to the NAD(P)-dependent epimerase/dehydratase family. It depends on NAD(+) as a cofactor.

The protein resides in the golgi apparatus. Its subcellular location is the golgi stack membrane. The enzyme catalyses UDP-beta-L-arabinopyranose = UDP-alpha-D-xylose. Its pathway is nucleotide-sugar biosynthesis; UDP-L-arabinose biosynthesis; UDP-L-arabinose from UDP-alpha-D-xylose: step 1/1. It participates in cell wall biogenesis; cell wall polysaccharide biosynthesis. In Arabidopsis thaliana (Mouse-ear cress), this protein is Putative UDP-arabinose 4-epimerase 2.